Here is a 37-residue protein sequence, read N- to C-terminus: Lambda-hexatoxin-Hf1a (37 aa).

Disulfide bonds link C4-C18, C11-C23, C14-C15, and C17-C34.

This sequence belongs to the neurotoxin 11 (kappa toxin) family. As to expression, expressed by the venom gland.

Its subcellular location is the secreted. This excitatory toxin inhibits insect calcium-activated potassium (KCa) channels (Slo-type). This chain is Lambda-hexatoxin-Hf1a, found in Hadronyche formidabilis (Northern tree funnel-web spider).